The sequence spans 422 residues: G-protein coupled receptor 151 protein (422 aa).

Over 1 to 45 the chain is Extracellular; the sequence is MGKAMLRAGFADTNSSNMNESFARLHFAGGYLPSDSKDWRTIIPS. 2 N-linked (GlcNAc...) asparagine glycosylation sites follow: Asn-14 and Asn-19. A helical membrane pass occupies residues 46–66; the sequence is LLMAVCLVGLVGNLCVIGILL. Residues 67–76 lie on the Cytoplasmic side of the membrane; the sequence is HGVWKRKPST. Residues 77–97 form a helical membrane-spanning segment; sequence IHSLILNLSLADFSLLLFSAP. At 98 to 123 the chain is on the extracellular side; it reads VRAAAYSKGVWDLGWFICKSSDWFTH. A disulfide bridge connects residues Cys-115 and Cys-191. A helical transmembrane segment spans residues 124–144; the sequence is VCMAAKSLTFVVVAKACFAYA. Residues 145-157 are Cytoplasmic-facing; the sequence is SDPAKQESIHSRT. Residues 158-178 form a helical membrane-spanning segment; it reads IWSVLAGIWVVASLLPLPEWL. Residues 179–205 lie on the Extracellular side of the membrane; it reads FSTTRRHAGVEMCLVDVPAVAEEFMSM. The helical transmembrane segment at 206 to 226 threads the bilayer; it reads FGKLYPLLVFCLPLLLAGVYF. Over 227 to 259 the chain is Cytoplasmic; that stretch reads WRAYDQCKTRCTKTRNLRDQMRSKQLTVMLLST. A helical transmembrane segment spans residues 260-280; sequence AIISALLWLPEWIAWLWVWHV. The Extracellular segment spans residues 281-290; sequence KAGGPMPPQG. Residues 291–311 traverse the membrane as a helical segment; it reads FIALSQVLMFFTSTANPLIFL. Residues 312–422 lie on the Cytoplasmic side of the membrane; the sequence is VMSEEFKAGL…HEGQETEGCN (111 aa). Residues 339 to 422 form a disordered region; sequence VQEAPAGNTE…HEGQETEGCN (84 aa). The segment covering 366 to 380 has biased composition (basic and acidic residues); the sequence is TDGRGSPDDSKEKSG.

As to expression, high expression in the brain and lower levels in kidney and liver. In the nervous system expressed specifically in the habenular area (at protein level).

Its subcellular location is the cell membrane. Its function is as follows. Proton-sensing G-protein coupled receptor. This chain is G-protein coupled receptor 151 protein (Gpr151), found in Mus musculus (Mouse).